Consider the following 2101-residue polypeptide: General transcription factor 3C polypeptide 1 (2101 aa).

Residues 473–487 (GEEAFLSDSESEEES) show a composition bias toward acidic residues. 2 disordered regions span residues 473–574 (GEEA…MDSH) and 588–609 (NPKE…DKPH). Residues 492-503 (GKRRGRGSRGHA) are compositionally biased toward basic residues. Low complexity predominate over residues 504–513 (RASGDAGSGS). Residue lysine 534 forms a Glycyl lysine isopeptide (Lys-Gly) (interchain with G-Cter in SUMO2) linkage. Serine 667 is modified (phosphoserine). Disordered regions lie at residues 718 to 772 (STAN…EKMG) and 820 to 864 (GEQP…SSWE). Over residues 747 to 759 (RSANSDPNTSSKP) the composition is skewed to polar residues. Composition is skewed to basic and acidic residues over residues 760–771 (ESTRVKKTDEKM) and 826–836 (HSERKTGKQES). Glycyl lysine isopeptide (Lys-Gly) (interchain with G-Cter in SUMO2) cross-links involve residues lysine 770 and lysine 833. Serine 1063 bears the Phosphoserine mark. Residues 1186-1196 (EEQFELDREPT) show a composition bias toward basic and acidic residues. Disordered regions lie at residues 1186 to 1239 (EEQF…KKLR), 1598 to 1627 (KSLG…QGVE), and 1822 to 1923 (DTKA…QENQ). At threonine 1196 the chain carries Phosphothreonine. Residues 1199–1215 (RNRKVRGGKSQKRKRLK) are compositionally biased toward basic residues. The segment covering 1229–1239 (EHPEAKSKKLR) has biased composition (basic and acidic residues). Residues 1606–1617 (LDDDEEEEDLDE) are compositionally biased toward acidic residues. Over residues 1822 to 1831 (DTKASGDDSQ) the composition is skewed to basic and acidic residues. Phosphoserine occurs at positions 1854 and 1890. A compositionally biased stretch (low complexity) spans 1900–1910 (EAQAPAQLAAP).

The protein belongs to the TFIIIC subunit 1 family. In terms of assembly, part of the TFIIIC subcomplex TFIIIC2, consisting of six subunits, GTF3C1, GTF3C2, GTF3C3, GTF3C4, GTF3C5 and GTF3C6. Interacts with IGHMBP2. Interacts with MAF1.

The protein localises to the nucleus. Functionally, required for RNA polymerase III-mediated transcription. Component of TFIIIC that initiates transcription complex assembly on tRNA and is required for transcription of 5S rRNA and other stable nuclear and cytoplasmic RNAs. Binds to the box B promoter element. This Mus musculus (Mouse) protein is General transcription factor 3C polypeptide 1 (Gtf3c1).